We begin with the raw amino-acid sequence, 184 residues long: 3-hydroxydecanoyl-[acyl-carrier-protein] dehydratase (184 aa).

Residue His77 is part of the active site.

It belongs to the thioester dehydratase family. FabA subfamily. Homodimer.

Its subcellular location is the cytoplasm. The catalysed reaction is a (3R)-hydroxyacyl-[ACP] = a (2E)-enoyl-[ACP] + H2O. The enzyme catalyses (3R)-hydroxydecanoyl-[ACP] = (2E)-decenoyl-[ACP] + H2O. It carries out the reaction (2E)-decenoyl-[ACP] = (3Z)-decenoyl-[ACP]. It participates in lipid metabolism; fatty acid biosynthesis. Necessary for the introduction of cis unsaturation into fatty acids. Catalyzes the dehydration of (3R)-3-hydroxydecanoyl-ACP to E-(2)-decenoyl-ACP and then its isomerization to Z-(3)-decenoyl-ACP. Can catalyze the dehydratase reaction for beta-hydroxyacyl-ACPs with saturated chain lengths up to 16:0, being most active on intermediate chain length. This is 3-hydroxydecanoyl-[acyl-carrier-protein] dehydratase from Hyphomonas neptunium (strain ATCC 15444).